A 716-amino-acid polypeptide reads, in one-letter code: MLCRRGSDYTAEFCHVPVSGELLKRGARDASLVTPARVASAAQTAAVPGCWPLAPLGNAMLWKSVYGGITAALKRAVGSFAFYQPLVLGINTQTGLLVTLRPAASAGEGGGDHVSPRAAIVNVSVEVDLDPAGIEASAASSTGSSLARARLCTLRDGYFLSKRDIALEVEIATKEVSFYRKYDSVQQPANKRRGDMADLFVVHERTLLLGGCKRMGVKVLLPRTFDCLVASSQSVSGLAAMALYKQWHATLFSVELPDTVVQIFAYLGPELNPCGEEVDYCCFVGFPGLPTLKASSSTTEAVRDAMAAYRLSDGLWPALGMSAFHFLAPWDPEDRWPGESEAKRVEGAVHRLQLGTEDDWGAGRVSCILESDAVMQGPWFAKFDFSAFFPTLYLLLFPANERLAEVVRLRARGQHPTLKLALVSFFGGLQHINPVAYRSIIALSNGISKRLEHEVNQRGFAICTYVKDGFWGAAGNLPSDSVSYADALVYAEELRSAAQKAALGHVSEMGFSLPEGVHLNLRLEGLFTDAISWSTHCYWLYNRFTKMEDFVGFPAKSGAGRAAKASLSALLPLVAAVCDSSDMSTLHQSVRGACEQLVAGAFAERNNPQFWSTRTGIESSTLLPPAVYRNGSLLDRDCGQREIVLTRKHDCESPSPVPWTLFPPPLVLGRIDCMVYLTSIFKTYLSMLNRAISASCDADESMNVDFPISDYAFLFT.

Belongs to the herpesviridae HEPA family. Associates with the primase and the helicase to form the helicase-primase complex. Interacts with the origin-binding protein. Interacts with the polymerase catalytic subunit.

It is found in the host nucleus. Functionally, component of the helicase/primase complex. Unwinds the DNA at the replication forks and generates single-stranded DNA for both leading and lagging strand synthesis. The primase synthesizes short RNA primers on the lagging strand that the polymerase presumably elongates using dNTPs. The primase-associated factor has no known catalytic activity in the complex and may serve to facilitate the formation of the replisome by directly interacting with the origin-binding protein and the polymerase. The chain is DNA helicase/primase complex-associated protein from Equus caballus (Horse).